The chain runs to 310 residues: Mycothiol acetyltransferase (310 aa).

2 consecutive N-acetyltransferase domains span residues Thr-5 to Arg-155 and Pro-160 to Ala-309. Position 80-82 (Leu-80–Val-82) interacts with acetyl-CoA. Residues Asp-187, Lys-226, and Glu-238 each contribute to the 1D-myo-inositol 2-(L-cysteinylamino)-2-deoxy-alpha-D-glucopyranoside site. Position 242–244 (Ile-242–Thr-244) interacts with acetyl-CoA. Tyr-276 contributes to the 1D-myo-inositol 2-(L-cysteinylamino)-2-deoxy-alpha-D-glucopyranoside binding site. Asn-281–Arg-286 is an acetyl-CoA binding site.

It belongs to the acetyltransferase family. MshD subfamily. As to quaternary structure, monomer.

The catalysed reaction is 1D-myo-inositol 2-(L-cysteinylamino)-2-deoxy-alpha-D-glucopyranoside + acetyl-CoA = mycothiol + CoA + H(+). Catalyzes the transfer of acetyl from acetyl-CoA to desacetylmycothiol (Cys-GlcN-Ins) to form mycothiol. This is Mycothiol acetyltransferase from Acidimicrobium ferrooxidans (strain DSM 10331 / JCM 15462 / NBRC 103882 / ICP).